A 176-amino-acid polypeptide reads, in one-letter code: Peptide deformylase (176 aa).

Residues Cys92 and His134 each coordinate Fe cation. Residue Glu135 is part of the active site. Position 138 (His138) interacts with Fe cation.

The protein belongs to the polypeptide deformylase family. The cofactor is Fe(2+).

It carries out the reaction N-terminal N-formyl-L-methionyl-[peptide] + H2O = N-terminal L-methionyl-[peptide] + formate. Functionally, removes the formyl group from the N-terminal Met of newly synthesized proteins. Requires at least a dipeptide for an efficient rate of reaction. N-terminal L-methionine is a prerequisite for activity but the enzyme has broad specificity at other positions. This is Peptide deformylase from Acinetobacter baumannii (strain SDF).